The following is a 270-amino-acid chain: Cyclohexanol dehydrogenase (270 aa).

NAD(+)-binding residues include R19, D40, D78, V79, N105, Y176, K180, I209, and T211. Y176 serves as the catalytic Proton acceptor.

It belongs to the short-chain dehydrogenases/reductases (SDR) family. As to quaternary structure, homodimer.

It localises to the cytoplasm. It carries out the reaction cyclohexanol + NAD(+) = cyclohexanone + NADH + H(+). With respect to regulation, activity is enhanced by the addition of Ba(2+) and Mg(2+), but inhibited by the addition of Al(3+), Ca(2+), Co(2+), Cu(2+), Mn(2+) and Zn(2+). Functionally, catalyzes the oxidation of cyclohexanol to cyclohexanone. Can also use a broad range of other alcohols, including trans-cyclohexane-1,2-diol, trans-cyclopentane-1,2-diol, cyclopentanol, hexane-1,2-diol, ethanol, 1-propanol, 1-butanol, 1-pentanol and 1-hexanol. The polypeptide is Cyclohexanol dehydrogenase (Rhodococcus sp. (strain TK6)).